Reading from the N-terminus, the 126-residue chain is Small ribosomal subunit protein bS6 (126 aa).

Residues 104–126 (QGAEKGKSSSKKVAAEAEASEEA) are disordered.

Belongs to the bacterial ribosomal protein bS6 family.

Functionally, binds together with bS18 to 16S ribosomal RNA. In Coxiella burnetii (strain Dugway 5J108-111), this protein is Small ribosomal subunit protein bS6.